We begin with the raw amino-acid sequence, 104 residues long: MSSGQSSSSSGKAGPQEPPSSAAEPAYRSPGLRGVRTTSLFRAVNPELFIRPNKPVMALGLLALSVCVGYLGYLHAIRDSDQQLYEAVDSDGETYMRRRTSRWD.

Residues 1–11 (MSSGQSSSSSG) show a composition bias toward low complexity. The segment at 1 to 31 (MSSGQSSSSSGKAGPQEPPSSAAEPAYRSPG) is disordered. The chain crosses the membrane as a helical span at residues 55–77 (PVMALGLLALSVCVGYLGYLHAI).

This sequence belongs to the SMIM8 family.

The protein resides in the membrane. The chain is Small integral membrane protein 8 (smim8) from Danio rerio (Zebrafish).